Here is a 159-residue protein sequence, read N- to C-terminus: Ribosomal RNA large subunit methyltransferase H (159 aa).

S-adenosyl-L-methionine contacts are provided by residues leucine 76, glycine 108, and 127–132 (FGLLTL).

This sequence belongs to the RNA methyltransferase RlmH family. As to quaternary structure, homodimer.

The protein localises to the cytoplasm. The catalysed reaction is pseudouridine(1915) in 23S rRNA + S-adenosyl-L-methionine = N(3)-methylpseudouridine(1915) in 23S rRNA + S-adenosyl-L-homocysteine + H(+). Its function is as follows. Specifically methylates the pseudouridine at position 1915 (m3Psi1915) in 23S rRNA. The polypeptide is Ribosomal RNA large subunit methyltransferase H (Streptococcus pyogenes serotype M3 (strain SSI-1)).